The sequence spans 21 residues: Fibrinogen beta chain (21 aa).

Q1 is subject to Pyrrolidone carboxylic acid. Y6 carries the sulfotyrosine modification.

As to quaternary structure, heterohexamer; disulfide linked. Contains 2 sets of 3 non-identical chains (alpha, beta and gamma). The 2 heterotrimers are in head to head conformation with the N-termini in a small central domain. In terms of processing, conversion of fibrinogen to fibrin is triggered by thrombin, which cleaves fibrinopeptides A and B from alpha and beta chains, and thus exposes the N-terminal polymerization sites responsible for the formation of the soft clot.

It localises to the secreted. In terms of biological role, cleaved by the protease thrombin to yield monomers which, together with fibrinogen alpha (FGA) and fibrinogen gamma (FGG), polymerize to form an insoluble fibrin matrix. Fibrin has a major function in hemostasis as one of the primary components of blood clots. In addition, functions during the early stages of wound repair to stabilize the lesion and guide cell migration during re-epithelialization. Was originally thought to be essential for platelet aggregation, based on in vitro studies using anticoagulated blood. However subsequent studies have shown that it is not absolutely required for thrombus formation in vivo. Enhances expression of SELP in activated platelets. Maternal fibrinogen is essential for successful pregnancy. Fibrin deposition is also associated with infection, where it protects against IFNG-mediated hemorrhage. May also facilitate the antibacterial immune response via both innate and T-cell mediated pathways. This Odocoileus hemionus (Mule deer) protein is Fibrinogen beta chain (FGB).